The primary structure comprises 272 residues: HMP-PP phosphatase (272 aa).

The active-site Nucleophile is the Asp8. Asp8, Asp10, and Asp212 together coordinate Mg(2+).

This sequence belongs to the HAD-like hydrolase superfamily. Cof family. The cofactor is Mg(2+).

It carries out the reaction 4-amino-2-methyl-5-(diphosphooxymethyl)pyrimidine + H2O = 4-amino-2-methyl-5-(phosphooxymethyl)pyrimidine + phosphate + H(+). In terms of biological role, catalyzes the hydrolysis of 4-amino-2-methyl-5-hydroxymethylpyrimidine pyrophosphate (HMP-PP) to 4-amino-2-methyl-5-hydroxymethylpyrimidine phosphate (HMP-P). The protein is HMP-PP phosphatase of Cronobacter sakazakii (strain ATCC BAA-894) (Enterobacter sakazakii).